The primary structure comprises 434 residues: MEKSVNVIGAGLAGSEATWQLVKRGIKVDLYEMRPVKQTPAHHTDKFAELVCTNSLRANGLTNAVGVIKEEMRILDSIIIESADKASVPAGGALAVDRHEFSGYITEKVKNHPLVTVHTEEVTSIPDGPTIIATGPLTSPALAEEIKQLTGEDYLYFYDAAAPIIEKDSIDMDKVYLKSRYDKGEAAYLNCPMSEEEFKTFYEALVTAETAALKEFEKEVFFEGCMPIEVMAKRGIKTMLFGPLKPVGLEDPKTGKRPYAVLQLRQDDAAGTLYNMVGFQTHLKWGEQKRVFGLIPGLENAEIVRYGVMHRNTFINSPTVLEPTYQLKTRDDLFFAGQMTGVEGYVESAASGLAAGINAANFVQEKETIVFPAESAIGSLAHYITSASKKSFQPMNVNFGLFPELPSKIRAKQERNEKLAERALDAIKKVAEQV.

9-14 serves as a coordination point for FAD; it reads GAGLAG.

Belongs to the MnmG family. TrmFO subfamily. The cofactor is FAD.

The protein localises to the cytoplasm. The enzyme catalyses uridine(54) in tRNA + (6R)-5,10-methylene-5,6,7,8-tetrahydrofolate + NADH + H(+) = 5-methyluridine(54) in tRNA + (6S)-5,6,7,8-tetrahydrofolate + NAD(+). It catalyses the reaction uridine(54) in tRNA + (6R)-5,10-methylene-5,6,7,8-tetrahydrofolate + NADPH + H(+) = 5-methyluridine(54) in tRNA + (6S)-5,6,7,8-tetrahydrofolate + NADP(+). Its function is as follows. Catalyzes the folate-dependent formation of 5-methyl-uridine at position 54 (M-5-U54) in all tRNAs. The sequence is that of Methylenetetrahydrofolate--tRNA-(uracil-5-)-methyltransferase TrmFO from Listeria welshimeri serovar 6b (strain ATCC 35897 / DSM 20650 / CCUG 15529 / CIP 8149 / NCTC 11857 / SLCC 5334 / V8).